We begin with the raw amino-acid sequence, 271 residues long: D-methionine-binding lipoprotein MetQ (271 aa).

An N-terminal signal peptide occupies residues 1–22; it reads MAFKFKTFAAVGALIGSLALVG. A lipid anchor (N-palmitoyl cysteine) is attached at Cys23. Cys23 carries S-diacylglycerol cysteine lipidation.

It belongs to the NlpA lipoprotein family.

The protein localises to the cell membrane. Its function is as follows. This protein is a component of a D-methionine permease, a binding protein-dependent, ATP-driven transport system. This Escherichia coli (strain K12) protein is D-methionine-binding lipoprotein MetQ (metQ).